We begin with the raw amino-acid sequence, 185 residues long: Calcium and integrin-binding family member 4 (185 aa).

EF-hand domains follow at residues 62-95, 97-132, and 138-174; these read RVNP…FSEQ, CPSL…LLKS, and DLLM…SPDF. 4 residues coordinate Ca(2+): D110, N112, N114, and D121.

In terms of assembly, interacts with ITGA2B (via C-terminus cytoplasmic tail region); the interaction is stabilized/increased in a calcium- and magnesium-dependent manner. As to expression, expressed weakly in megakaryocytes and endothelial cells.

This Mus musculus (Mouse) protein is Calcium and integrin-binding family member 4 (Cib4).